A 305-amino-acid chain; its full sequence is MENKYTHGVLFYHEHSGLKNINQGIGEVTTALSSICKHLSIQLSENEGDIIKYCQEIKTKNYAKDVDILFILGGDGTVNELINGVMSHDLQLPIGILPGGTFNDFTKTLNIAPNHKQASEQMISAQVGTYDVIKINNQYALNFVGLGLIVQNAENVQDGSKDIFGKLSYIGSTVKTLLNPTQFNYQLSIDDKTYSGETTMILTANGPFIGGSRIPLTDLSPQDGELNTFIFNEQSFSILNDIFKKRDSMNWNEITQGIEHIPGKKISLTTDPAMKVDIDGEISLETPIDIEVIPNAIQLLTVNDL.

Residues 3 to 139 (NKYTHGVLFY…YDVIKINNQY (137 aa)) enclose the DAGKc domain. ATP is bound by residues S44, 74–80 (GDGTVNE), and T101. Mg(2+)-binding residues include S220, D223, and E225. The active-site Proton acceptor is the E281.

Belongs to the diacylglycerol/lipid kinase family. It depends on Mg(2+) as a cofactor.

In terms of biological role, may catalyze the ATP-dependent phosphorylation of lipids other than diacylglycerol (DAG). The polypeptide is Putative lipid kinase SaurJH9_0749 (Staphylococcus aureus (strain JH9)).